The sequence spans 619 residues: MHEQRSLTMNALTPAVSTGPLPASRKIHKSGVLHPQIRVPMREISVHPTAGEPPVIVYDPSGPYTDPTVETSIEKGLARLRHEWITARGDVEAYDGRHVRPEDNGFAVGERLTPEFPVRNRPLRARSGKAVTQLAYARAGIITPEMEFVAIRENLGREMLRGTLQRDGEAFGASIPDLVTPEFVRDEVAHGRAIIPANINHPESEPMIIGRNFLVKINANIGNSAVTSSMAEEVEKMVWAIRWGADTVMDLSTGRNIHNIRDWIVRNAPVPIGTVPLYQALEKVGGIAEDLTWEVYRDTLIEQAEQGVDYFTIHAGVRLHYIPLTVDRVTGIVSRGGSIMAKWCLHHHRESFLYEHFAEVCDICRAYDVSFSLGDGLRPGSIADANDAAQFAELETLGELTKIAWAKDCQVMIEGPGHVPMHKIKANMDKQLAVCGEAPFYTLGPLTTDIAPGYDHITSGIGAAMIGWFGTAMLCYVTPKEHLGLPDRNDVKIGVITYKIAAHAADLAKGHPAAKVRDDALSRARFEFRWEDQFNLSLDPETARSFHDQTLPKEAHKLAHFCSMCGPKFCSMRISHDIRAEAQKEGMAAMAAKYREGGDLYVPAEESGAPLMPEAHELS.

The segment covering 1–11 (MHEQRSLTMNA) has biased composition (polar residues). Residues 1–25 (MHEQRSLTMNALTPAVSTGPLPASR) form a disordered region. Substrate-binding positions include asparagine 220, methionine 249, tyrosine 278, histidine 314, 334–336 (SRG), 375–378 (DGLR), and glutamate 414. Residue histidine 418 coordinates Zn(2+). Position 441 (tyrosine 441) interacts with substrate. Zn(2+) is bound at residue histidine 482. The [4Fe-4S] cluster site is built by cysteine 562, cysteine 565, and cysteine 570.

This sequence belongs to the ThiC family. Homodimer. The cofactor is [4Fe-4S] cluster.

The catalysed reaction is 5-amino-1-(5-phospho-beta-D-ribosyl)imidazole + S-adenosyl-L-methionine = 4-amino-2-methyl-5-(phosphooxymethyl)pyrimidine + CO + 5'-deoxyadenosine + formate + L-methionine + 3 H(+). It participates in cofactor biosynthesis; thiamine diphosphate biosynthesis. Its function is as follows. Catalyzes the synthesis of the hydroxymethylpyrimidine phosphate (HMP-P) moiety of thiamine from aminoimidazole ribotide (AIR) in a radical S-adenosyl-L-methionine (SAM)-dependent reaction. This is Phosphomethylpyrimidine synthase from Mesorhizobium japonicum (strain LMG 29417 / CECT 9101 / MAFF 303099) (Mesorhizobium loti (strain MAFF 303099)).